The chain runs to 356 residues: S-adenosylmethionine:tRNA ribosyltransferase-isomerase (356 aa).

This sequence belongs to the QueA family. As to quaternary structure, monomer.

It localises to the cytoplasm. The catalysed reaction is 7-aminomethyl-7-carbaguanosine(34) in tRNA + S-adenosyl-L-methionine = epoxyqueuosine(34) in tRNA + adenine + L-methionine + 2 H(+). It functions in the pathway tRNA modification; tRNA-queuosine biosynthesis. Transfers and isomerizes the ribose moiety from AdoMet to the 7-aminomethyl group of 7-deazaguanine (preQ1-tRNA) to give epoxyqueuosine (oQ-tRNA). The protein is S-adenosylmethionine:tRNA ribosyltransferase-isomerase of Yersinia pseudotuberculosis serotype O:3 (strain YPIII).